Reading from the N-terminus, the 223-residue chain is Ribose-5-phosphate isomerase A (223 aa).

Substrate is bound by residues 29–32 (TGST), 82–85 (DGAD), and 95–98 (KGGG). The Proton acceptor role is filled by glutamate 104. Lysine 122 contacts substrate.

The protein belongs to the ribose 5-phosphate isomerase family. In terms of assembly, homodimer.

The enzyme catalyses aldehydo-D-ribose 5-phosphate = D-ribulose 5-phosphate. The protein operates within carbohydrate degradation; pentose phosphate pathway; D-ribose 5-phosphate from D-ribulose 5-phosphate (non-oxidative stage): step 1/1. Its function is as follows. Catalyzes the reversible conversion of ribose-5-phosphate to ribulose 5-phosphate. The protein is Ribose-5-phosphate isomerase A of Neisseria meningitidis serogroup C (strain 053442).